Here is a 290-residue protein sequence, read N- to C-terminus: tRNA dimethylallyltransferase (290 aa).

11–18 lines the ATP pocket; the sequence is GPTASGKS. Substrate is bound at residue 13 to 18; sequence TASGKS. Interaction with substrate tRNA regions lie at residues 36–39 and 158–162; these read DSMQ and QRIVR.

The protein belongs to the IPP transferase family. As to quaternary structure, monomer. It depends on Mg(2+) as a cofactor.

It catalyses the reaction adenosine(37) in tRNA + dimethylallyl diphosphate = N(6)-dimethylallyladenosine(37) in tRNA + diphosphate. Functionally, catalyzes the transfer of a dimethylallyl group onto the adenine at position 37 in tRNAs that read codons beginning with uridine, leading to the formation of N6-(dimethylallyl)adenosine (i(6)A). This chain is tRNA dimethylallyltransferase, found in Bartonella henselae (strain ATCC 49882 / DSM 28221 / CCUG 30454 / Houston 1) (Rochalimaea henselae).